Consider the following 78-residue polypeptide: Large ribosomal subunit protein bL28 (78 aa).

The segment at 1–20 (MSRVCQVTGKRPVTGNNRSH) is disordered.

Belongs to the bacterial ribosomal protein bL28 family.

This Vibrio atlanticus (strain LGP32) (Vibrio splendidus (strain Mel32)) protein is Large ribosomal subunit protein bL28.